We begin with the raw amino-acid sequence, 351 residues long: uncharacterized protein (351 aa).

Mn(2+) is bound by residues aspartate 215, aspartate 226, histidine 290, glutamate 319, and glutamate 333.

It belongs to the peptidase M24B family. Mn(2+) serves as cofactor.

This is an uncharacterized protein from Staphylococcus aureus (strain MSSA476).